A 443-amino-acid chain; its full sequence is Probable nitrate/nitrite antiporter NarK1 (443 aa).

12 helical membrane-spanning segments follow: residues 23-43 (TLAF…GVPI), 56-76 (WISA…GILA), 79-99 (YGGR…AYLV), 108-128 (LLLY…GIAW), 142-164 (LGVF…ALIA), 182-202 (FIPF…WFGT), 230-250 (FSLY…WLPK), 255-275 (VFGL…FPAS), 298-318 (FGII…IVLY), 329-349 (FTMG…GMGI), 368-388 (AVGG…PPLF), and 401-421 (TFFV…LTVL).

It belongs to the major facilitator superfamily. Nitrate/nitrite porter (TC 2.A.1.8) family.

The protein localises to the cell membrane. The enzyme catalyses nitrate(in) + nitrite(out) = nitrate(out) + nitrite(in). Its function is as follows. Probable nitrate/nitrite antiporter that may be involved in nitrate import and nitrite export during anaerobic growth. In Thermus thermophilus, this protein is Probable nitrate/nitrite antiporter NarK1.